Consider the following 509-residue polypeptide: Hexokinase-4, chloroplastic (509 aa).

A chloroplast-targeting transit peptide spans 1 to 37 (MSAAAAIASPIPAAIAVVQQQRRGRSRGGGSGAAAVR). Positions 45 to 496 (SAIAPILADL…SGIGAALLAA (452 aa)) constitute a Hexokinase domain. Positions 100–238 (TGNETGLFYA…GLDMRVSALV (139 aa)) are hexokinase small subdomain. Residues Gly-114, Thr-115, and Asn-116 each coordinate ADP. D-glucose is bound by residues Thr-204, Lys-205, Asn-239, and Asp-240. Residues 239-485 (NDTVGTLAGA…NRIAIEHTKD (247 aa)) form a hexokinase large subdomain region. ADP is bound at residue Thr-263. 3 residues coordinate D-glucose: Asn-266, Glu-294, and Glu-324. Gly-450 provides a ligand contact to ADP.

Belongs to the hexokinase family. Expressed in roots, leaves, flowers, immature seeds, endosperm and seed coat.

The protein resides in the plastid. It is found in the chloroplast stroma. It carries out the reaction a D-hexose + ATP = a D-hexose 6-phosphate + ADP + H(+). The catalysed reaction is D-fructose + ATP = D-fructose 6-phosphate + ADP + H(+). The enzyme catalyses D-glucose + ATP = D-glucose 6-phosphate + ADP + H(+). It participates in carbohydrate metabolism; hexose metabolism. It functions in the pathway carbohydrate degradation; glycolysis; D-glyceraldehyde 3-phosphate and glycerone phosphate from D-glucose: step 1/4. Functionally, fructose and glucose phosphorylating enzyme. This chain is Hexokinase-4, chloroplastic (HXK4), found in Oryza sativa subsp. japonica (Rice).